The primary structure comprises 264 residues: 3-methyl-2-oxobutanoate hydroxymethyltransferase (264 aa).

Residues Asp45 and Asp84 each coordinate Mg(2+). 3-methyl-2-oxobutanoate contacts are provided by residues 45 to 46, Asp84, and Lys112; that span reads DS. Glu114 serves as a coordination point for Mg(2+). Glu181 (proton acceptor) is an active-site residue.

It belongs to the PanB family. As to quaternary structure, homodecamer; pentamer of dimers. Requires Mg(2+) as cofactor.

It localises to the cytoplasm. The enzyme catalyses 3-methyl-2-oxobutanoate + (6R)-5,10-methylene-5,6,7,8-tetrahydrofolate + H2O = 2-dehydropantoate + (6S)-5,6,7,8-tetrahydrofolate. It participates in cofactor biosynthesis; (R)-pantothenate biosynthesis; (R)-pantoate from 3-methyl-2-oxobutanoate: step 1/2. Catalyzes the reversible reaction in which hydroxymethyl group from 5,10-methylenetetrahydrofolate is transferred onto alpha-ketoisovalerate to form ketopantoate. The sequence is that of 3-methyl-2-oxobutanoate hydroxymethyltransferase from Alteromonas mediterranea (strain DSM 17117 / CIP 110805 / LMG 28347 / Deep ecotype).